We begin with the raw amino-acid sequence, 356 residues long: MAKENICIIYGGKSAEHDVSILTAQNVLNAINKDDYQVDIIYITNDGAWKKKDDITENVEDVDSLRLEEVEEGEISNLLTNSSSGQPYAAVFPLLHGPNGEDGTIQGLFEVLDLPYVGNGVLAASSTMDKLVMKQLFAHRGLPQLPYVSFLRSEYEKYQSNILKLVKDKLEFPVFVKPANLGSSVGISKCNNEEELKSGIEEAFQFDRKLVIEQGIEAREIEVAVLGNDYPETTQPGEVVKDVAFYDYKSKYLDGKVQLSIPAELDSEVQTTLRNMAAEAFKATDCSGLLRADFFVTEDNQIFINETNAMPGFTQYSMYPSLWENMGLSYADLITKLIELAKEKHVEKQKNKYKID.

Positions 134–339 (KQLFAHRGLP…YADLITKLIE (206 aa)) constitute an ATP-grasp domain. 167 to 222 (KDKLEFPVFVKPANLGSSVGISKCNNEEELKSGIEEAFQFDRKLVIEQGIEAREIE) is a binding site for ATP. Residues Asp-293, Glu-306, and Asn-308 each coordinate Mg(2+).

It belongs to the D-alanine--D-alanine ligase family. Mg(2+) serves as cofactor. Requires Mn(2+) as cofactor.

The protein resides in the cytoplasm. It carries out the reaction 2 D-alanine + ATP = D-alanyl-D-alanine + ADP + phosphate + H(+). Its pathway is cell wall biogenesis; peptidoglycan biosynthesis. Its function is as follows. Cell wall formation. In Staphylococcus carnosus (strain TM300), this protein is D-alanine--D-alanine ligase.